We begin with the raw amino-acid sequence, 509 residues long: Cobyric acid synthase (509 aa).

Residues 262-459 (EIKVGIIKLP…IHGIFENDSW (198 aa)) enclose the GATase cobBQ-type domain. Cysteine 343 acts as the Nucleophile in catalysis. Residue histidine 451 is part of the active site.

This sequence belongs to the CobB/CobQ family. CobQ subfamily.

It functions in the pathway cofactor biosynthesis; adenosylcobalamin biosynthesis. Its function is as follows. Catalyzes amidations at positions B, D, E, and G on adenosylcobyrinic A,C-diamide. NH(2) groups are provided by glutamine, and one molecule of ATP is hydrogenolyzed for each amidation. This chain is Cobyric acid synthase, found in Prochlorococcus marinus (strain MIT 9215).